A 433-amino-acid polypeptide reads, in one-letter code: Arabinooligosaccharide-binding protein (433 aa).

The N-terminal stretch at 1–21 is a signal peptide; it reads MKKMTVCFLVLMMLLTLVIAG. Cys-22 carries N-palmitoyl cysteine lipidation. The S-diacylglycerol cysteine moiety is linked to residue Cys-22.

The protein belongs to the bacterial solute-binding protein 1 family. As to quaternary structure, the complex is composed of two ATP-binding proteins (MsmX), two transmembrane proteins (AraP and AraQ) and a solute-binding protein (AraN).

Its subcellular location is the cell membrane. Part of the ABC transporter complex AraNPQ involved in the uptake of arabinooligosaccharides. Transports alpha-1,5-arabinooligosaccharides, at least up to four L-arabinosyl units. AraN captures the substrate and delivers it to the two transmembrane components. The chain is Arabinooligosaccharide-binding protein from Bacillus subtilis (strain 168).